The sequence spans 273 residues: MGSKEDVGKGCPAAGGVSSFTIQSILGGGPSEAPREPAGWPARKRSLSVSSEEEEPEEGWKAPACFCPDPHGPKEPSPKHHTPIPFPCLGTPKGSGGAGPAASERTPFLSPSHPDFKEEKERLLPAGSPSPGPERPRDGGAERQTGAAKKKTRTVFSRSQVYQLESTFDMKRYLSSSERACLASSLQLTETQVKTWFQNRRNKWKRQLSAELEAANMAHASAQTLVGMPLVFRDSSLLRVPVPRSLAFPAPLYYPSSNLSALPLYNLYNKLDY.

The segment at 1-154 is disordered; that stretch reads MGSKEDVGKG…TGAAKKKTRT (154 aa). Residues 114–123 show a composition bias toward basic and acidic residues; that stretch reads PDFKEEKERL. A DNA-binding region (homeobox) is located at residues 149 to 208; the sequence is KKKTRTVFSRSQVYQLESTFDMKRYLSSSERACLASSLQLTETQVKTWFQNRRNKWKRQL.

It belongs to the HMX homeobox family. In terms of tissue distribution, expressed in the developing CNS, including a specific expression in vestibular structures throughout inner ear development.

It localises to the nucleus. Functionally, transcription factor involved in specification of neuronal cell types and which is required for inner ear and hypothalamus development. In Mus musculus (Mouse), this protein is Homeobox protein HMX2 (Hmx2).